The following is a 735-amino-acid chain: Delta-1-pyrroline-5-carboxylate synthase 2 (735 aa).

The interval 1–315 is glutamate 5-kinase; that stretch reads MGRGGIGGAG…WGCSKEATAR (315 aa). Residues Ser-79, Asp-176, and Asn-195 each contribute to the substrate site. ATP contacts are provided by residues 215 to 216, 221 to 226, and 255 to 261; these read SD, YSGPPS, and RGGMQAK. A gamma-glutamyl phosphate reductase region spans residues 316 to 735; sequence EMAVAARDCS…VYTHRELPLQ (420 aa).

It in the N-terminal section; belongs to the glutamate 5-kinase family. The protein in the C-terminal section; belongs to the gamma-glutamyl phosphate reductase family.

The catalysed reaction is L-glutamate + ATP = L-glutamyl 5-phosphate + ADP. It catalyses the reaction L-glutamate 5-semialdehyde + phosphate + NADP(+) = L-glutamyl 5-phosphate + NADPH + H(+). The protein operates within amino-acid biosynthesis; L-proline biosynthesis; L-glutamate 5-semialdehyde from L-glutamate: step 1/2. It functions in the pathway amino-acid biosynthesis; L-proline biosynthesis; L-glutamate 5-semialdehyde from L-glutamate: step 2/2. Feedback regulated by proline. Its function is as follows. P5CS plays a key role in proline biosynthesis, leading to osmoregulation in plants. Involved in abiotic stress tolerance. The sequence is that of Delta-1-pyrroline-5-carboxylate synthase 2 from Oryza sativa subsp. japonica (Rice).